The primary structure comprises 309 residues: NADH-cytochrome b5 reductase 1 (309 aa).

The chain crosses the membrane as a helical span at residues Glu-29–Gly-49. An FAD-binding FR-type domain is found at Thr-60–Thr-165. Residues Thr-145–Gly-160 and His-171–Leu-208 each bind FAD.

Belongs to the flavoprotein pyridine nucleotide cytochrome reductase family. Monomer. Component of the 2-(3-amino-3-carboxypropyl)histidine synthase complex composed of dph1, dph2, dph3 and a NADH-dependent reductase, predominantly cbr1. The cofactor is FAD.

The protein resides in the mitochondrion outer membrane. It catalyses the reaction 2 Fe(III)-[cytochrome b5] + NADH = 2 Fe(II)-[cytochrome b5] + NAD(+) + H(+). The catalysed reaction is 2 Fe(3+)-[Dph3] + NADH = 2 Fe(2+)-[Dph3] + NAD(+) + H(+). It participates in protein modification; peptidyl-diphthamide biosynthesis. Functionally, NADH-dependent reductase for dph3 and cytochrome b5. Required for the first step of diphthamide biosynthesis, a post-translational modification of histidine which occurs in elongation factor 2. Dph1 and dph2 transfer a 3-amino-3-carboxypropyl (ACP) group from S-adenosyl-L-methionine (SAM) to a histidine residue, the reaction is assisted by a reduction system comprising dph3 and a NADH-dependent reductase, predominantly cbr1. By reducing dph3, also involved in the formation of the tRNA wobble base modification mcm5s 2U (5-methoxycarbonylmethyl-2-thiouridine), mediated by the elongator complex. The cytochrome b5/NADH cytochrome b5 reductase electron transfer system supports the catalytic activity of several sterol biosynthetic enzymes. The polypeptide is NADH-cytochrome b5 reductase 1 (cbr1) (Aspergillus clavatus (strain ATCC 1007 / CBS 513.65 / DSM 816 / NCTC 3887 / NRRL 1 / QM 1276 / 107)).